A 158-amino-acid chain; its full sequence is Non-secretory ribonuclease (158 aa).

The signal sequence occupies residues 1-27 (MVPKLFTSQICLLLLLGLSSLEVSLHA). C-linked (Man) tryptophan glycosylation occurs at W34. The active-site Proton acceptor is H42. Y60 carries the post-translational modification 3'-nitrotyrosine. 65–69 (KNRNT) contributes to the substrate binding site. N-linked (GlcNAc...) asparagine glycans are attached at residues N86, N92, and N111. H153 (proton donor) is an active-site residue.

This sequence belongs to the pancreatic ribonuclease family. As to quaternary structure, interacts with and forms a tight 1:1 complex with RNH1. Dimerization of two such complexes may occur.

Its subcellular location is the lysosome. The protein resides in the cytoplasmic granule. It catalyses the reaction an [RNA] containing cytidine + H2O = an [RNA]-3'-cytidine-3'-phosphate + a 5'-hydroxy-ribonucleotide-3'-[RNA].. The enzyme catalyses an [RNA] containing uridine + H2O = an [RNA]-3'-uridine-3'-phosphate + a 5'-hydroxy-ribonucleotide-3'-[RNA].. Functionally, this is a non-secretory ribonuclease. It is a pyrimidine specific nuclease with a slight preference for U. Cytotoxin and helminthotoxin. Possesses a wide variety of biological activities. The sequence is that of Non-secretory ribonuclease (RNASE2) from Saguinus labiatus (Red-chested mustached tamarin).